A 117-amino-acid polypeptide reads, in one-letter code: Protein MGF 110-13L (117 aa).

The N-terminal stretch at M1–P16 is a signal peptide.

It belongs to the asfivirus MGF 110 family.

The polypeptide is Protein MGF 110-13L (Ornithodoros (relapsing fever ticks)).